Reading from the N-terminus, the 370-residue chain is UDP-N-acetylglucosamine--N-acetylmuramyl-(pentapeptide) pyrophosphoryl-undecaprenol N-acetylglucosamine transferase (370 aa).

UDP-N-acetyl-alpha-D-glucosamine-binding positions include 10–12 (TGG), Asn124, Arg166, Ser198, Ile252, and Gln297.

This sequence belongs to the glycosyltransferase 28 family. MurG subfamily.

The protein resides in the cell membrane. It catalyses the reaction di-trans,octa-cis-undecaprenyl diphospho-N-acetyl-alpha-D-muramoyl-L-alanyl-D-glutamyl-meso-2,6-diaminopimeloyl-D-alanyl-D-alanine + UDP-N-acetyl-alpha-D-glucosamine = di-trans,octa-cis-undecaprenyl diphospho-[N-acetyl-alpha-D-glucosaminyl-(1-&gt;4)]-N-acetyl-alpha-D-muramoyl-L-alanyl-D-glutamyl-meso-2,6-diaminopimeloyl-D-alanyl-D-alanine + UDP + H(+). It functions in the pathway cell wall biogenesis; peptidoglycan biosynthesis. Cell wall formation. Catalyzes the transfer of a GlcNAc subunit on undecaprenyl-pyrophosphoryl-MurNAc-pentapeptide (lipid intermediate I) to form undecaprenyl-pyrophosphoryl-MurNAc-(pentapeptide)GlcNAc (lipid intermediate II). The polypeptide is UDP-N-acetylglucosamine--N-acetylmuramyl-(pentapeptide) pyrophosphoryl-undecaprenol N-acetylglucosamine transferase (Finegoldia magna (strain ATCC 29328 / DSM 20472 / WAL 2508) (Peptostreptococcus magnus)).